We begin with the raw amino-acid sequence, 109 residues long: Small serum protein 2 (109 aa).

A signal peptide spans 1-19; that stretch reads MRVFFSLIIFSFMLATCQG. 5 disulfides stabilise this stretch: Cys21–Cys72, Cys39–Cys64, Cys59–Cys93, Cys62–Cys71, and Cys84–Cys107.

Forms a stable, non-covalent complex with serotriflin.

The protein resides in the secreted. Its function is as follows. May serve as a self-defense protein against the toxic effects of the snake venom during accidental envenomation. Does not show inhibitory activity towards brevilysin H6. The protein is Small serum protein 2 of Protobothrops flavoviridis (Habu).